A 1378-amino-acid chain; its full sequence is Hybrid signal transduction histidine kinase H (1378 aa).

Residues 212-242 (KEKFKKEELINDFKSRLETLENKIDQRVDER) are a coiled coil. The region spanning 243 to 314 (IETRFKYVLE…NNNNNNNNNN (72 aa)) is the PAS domain. Positions 294-337 (YQQHNNNNNNNNNNNNNNNNNNNNNSNNKSPIINSPNTTSPTNT) are disordered. Over residues 298-337 (NNNNNNNNNNNNNNNNNNNNNSNNKSPIINSPNTTSPTNT) the composition is skewed to low complexity. Positions 498-805 (TMSHEMRTPL…SFHFLVEVFF (308 aa)) constitute a Histidine kinase domain. His501 bears the Phosphohistidine; by autocatalysis mark. Positions 663–696 (NNSNNSNNNHNHNNNNNNNNHLNCSGSFNNNGFN) are enriched in low complexity. 3 disordered regions span residues 663–717 (NNSN…DKHC), 905–924 (TNNN…STTT), and 1103–1213 (NNSN…HPNP). The span at 697–714 (HGHHHHHHHHHHHHHHHD) shows a compositional bias: basic residues. 2 stretches are compositionally biased toward low complexity: residues 1103 to 1119 (NNSN…SGSS) and 1136 to 1187 (SPSL…NNNN). The segment covering 1188-1206 (LNHYNSDSILSSDLSPQQH) has biased composition (polar residues). One can recognise a Response regulatory domain in the interval 1244–1364 (KIMVAEDSLV…ILAVELKRAW (121 aa)). Asp1297 is subject to 4-aspartylphosphate.

In terms of processing, activation probably requires transfer of a phosphate group between a histidine in the kinase core (transmitter) domain and an aspartate of the receiver domain.

The catalysed reaction is ATP + protein L-histidine = ADP + protein N-phospho-L-histidine.. In terms of biological role, acts as a receptor histidine kinase for a signal transduction pathway. This protein undergoes an ATP-dependent autophosphorylation at a conserved histidine residue in the kinase core, and a phosphoryl group is then transferred to a conserved aspartate residue in the receiver domain. The sequence is that of Hybrid signal transduction histidine kinase H (dhkH) from Dictyostelium discoideum (Social amoeba).